Consider the following 1596-residue polypeptide: MIYRAILKRLRLEQLARVPAVSAASPFVMMAVGVFLMLMAGGVTISTTSQAFVTCGTVGLFLLLKGRKGRGVTCFLMMLSLLVSLRYMVWRLTTTLELHSPLQAALSLLLVAAELYALLTLCLSYFQMSWPLDRKPLPLPADTTDWPVVDVYVPSYNEELSLVRSTVLGALAIDWPADKLNVYILDDGRRKSFHAFAMEAGAGYIIRDQNNHAKAGNLNHALRVTEGEYVVIFDCDHIPTRGFLKKTIGWMMADPKLALLQTPHHFYSPDPFQRNLATGQNVPPEGNMFYGLVQDGNDFWDATFFCGSCAAIRRSAVLGIGGFATETVTEDAHTALKMQREGWHTAYLRQPLAAGLSTERLMLHIGQRVRWARGMLQIMRLDNPLLGSGLRWQQRLCYLSAMSHFLFAIPRLVFLASPLAFLFLGQNIIAASPFAILVYAFPHVFHSIGTLSRVEGRWRYSFWSEIYETTLALFLVRVTIMTLLNPRKGEFNVTDKGGLLQSEYFDLNAVYPNVILAVILALALVRGIGGMMWEYHDRLALQSFALNTLWVAVSLIIVLASIAVGRETRQIRHKPRVRATLPITLIDEHGQHYHAHTSDISLGGIAARLSTEHALPTQTRVTMLYHNEKDGIDVRIPAVILFSKPGQLHLQWSVDDLDVERQIVEFMFGRNDAWSNWGDFQPDRPVRSFLMVLRSIGGLFRRGQRLFRWQAPQEAPLAESEHVEEEKLEKKSLVLKPVRRSARHGATASLIVLLGLPAAIAPSLAQAPSRATPVATEQGATPVEPPPVNAPPPPSLPQPPGTLPTPPQIAPASAGELLPAATAVSLPTGPATQQMRERLSERTGVSPASPFGDTNTGALPADPSAPPIDPADAARVADGEITRTSTFRDLGLATGPLTLRGFSPLQGLDVIVPANRVVTRARITLSGALSPSLLPEASAVSVTLNEQYVGTIRVDPEHPRFGPITFDIDPLYFTGDNKLNFHFAGEYRRDCNDLYNEVLWARISDFSTVTLTTTRIAPDRKLSYLPAPFYDPNLRTPLRVPVVMPNPDAHGMLKASALVASWFGKLADFRKVSFPVSTTIPASGNAIAIGENLPIDARGTRPTGPTLSEVENPNDRLGTILVLTGRNAQEVEVAARVLAFSSDTLGAVGTKVVNDVTLQPRHPYDAPAFVPTDRPVRFGELVAASDLQGGGFAPPVMALPFHLPPDLYSWRNRPYPIDLWVRTPGGPVVDLETSRLDVHLNNNYLDSFTLKPPSLWAAWSERLVNQHAGAVEHAAALPPWLLFGQNQLKFSFDARPIDRGVCRRTPDDIHMSVDSDSWLDFRRGYHFARLPNLSYFAEAAFPFSRMADLSETTVVVPHHIDAGTAGTFMDLMGFFGATTWYPASGVQVADINDLSEHPPQGDILILATAGDAPKFEELLTRAPYELTDGHIRVGQHMGLQGIWYLFQDHDHAGLQDGVQANLNAPIAGAGVLLGAQSPYRSDRSVVALMGDTPSRMHDLVMGLRSKEDVPRIQGDLVLRNGDRLTSYRTAPTFTMGSLPWWMWLDWYLGTRPLTLYVLGLVGAGLVAAAAVRLLRRRAQHRLEEAARVKDTTDASH.

Residues 1-749 (MIYRAILKRL…RSARHGATAS (749 aa)) form a catalytic region. Transmembrane regions (helical) follow at residues 25 to 45 (SPFV…GVTI) and 106 to 126 (LSLL…LSYF). The catalytic subdomain A stretch occupies residues 145 to 238 (DWPVVDVYVP…YVVIFDCDHI (94 aa)). Residue Asp-187 is part of the active site. Residues Asp-234 and Asp-236 each contribute to the substrate site. The segment at 315-375 (SAVLGIGGFA…GQRVRWARGM (61 aa)) is catalytic subdomain B. Residue Asp-331 is part of the active site. The next 4 membrane-spanning stretches (helical) occupy residues 396–416 (LCYL…VFLA), 421–441 (FLFL…VYAF), 505–525 (FDLN…LALV), and 544–564 (FALN…SIAV). The PilZ domain maps to 570-669 (QIRHKPRVRA…ERQIVEFMFG (100 aa)). The tract at residues 750–1596 (LIVLLGLPAA…RVKDTTDASH (847 aa)) is cyclic di-GMP binding domain. Disordered regions lie at residues 769–812 (SRAT…IAPA) and 828–868 (TGPA…APPI). Pro residues predominate over residues 783–809 (VEPPPVNAPPPPSLPQPPGTLPTPPQI). The chain crosses the membrane as a helical span at residues 1553-1573 (LTLYVLGLVGAGLVAAAAVRL).

In the N-terminal section; belongs to the glycosyltransferase 2 family. This sequence in the C-terminal section; belongs to the AcsB/BcsB family.

It localises to the cell inner membrane. It catalyses the reaction [(1-&gt;4)-beta-D-glucosyl](n) + UDP-alpha-D-glucose = [(1-&gt;4)-beta-D-glucosyl](n+1) + UDP + H(+). This Novacetimonas hansenii (Komagataeibacter hansenii) protein is Cellulose synthase 2 (acsAII).